Reading from the N-terminus, the 830-residue chain is FYN-binding protein 1 (830 aa).

The disordered stretch occupies residues 1-501; that stretch reads MDGKTDVKSL…REKKEQELRK (501 aa). Position 13 is an N6-acetyllysine (K13). Polar residues predominate over residues 15-55; the sequence is NTGSNPTEEVSTSSRPFKVAGQNSPSGIQSKKNLFDNQGNA. A phosphoserine mark is found at S38 and S56. Over residues 79 to 89 the composition is skewed to basic and acidic residues; the sequence is TYEEKSEKEPK. The residue at position 233 (S233) is a Phosphoserine. Composition is skewed to basic and acidic residues over residues 248–259 and 284–296; these read PAKEDPEDKDHG and NSEE…KTDI. Position 329 is a phosphoserine (S329). Positions 330–339 are enriched in basic and acidic residues; that stretch reads QEKEGDKDSA. Pro residues-rich tracts occupy residues 344-362 and 391-407; these read KPLP…PSRP and LPPP…PLPA. The interaction with SKAP1 stretch occupies residues 347–447; that stretch reads PPLSVLGPPP…QDGVMHSDGT (101 aa). Residues 450-464 show a composition bias toward acidic residues; it reads LEEEQESDGEMYEDI. S456 bears the Phosphoserine mark. Residues 461-464 carry the SH2-binding motif; sequence YEDI. Over residues 465–500 the composition is skewed to basic and acidic residues; that stretch reads ESSKERDKKREKEEKKRLELERKEQKEREKKEQELR. A coiled-coil region spans residues 465–502; sequence ESSKERDKKREKEEKKRLELERKEQKEREKKEQELRKK. Positions 479–486 match the Nuclear localization signal motif; sequence KKRLELER. Residues 510-571 form the SH3 1 domain; it reads QVIHHAKACC…KTTAVKIDYD (62 aa). A Phosphotyrosine modification is found at Y570. Position 572 is a phosphoserine (S572). The SH2-binding; to LCP2 motif lies at 595–598; it reads YDDV. Disordered stretches follow at residues 601 to 646 and 660 to 739; these read QDAP…DEKT and KDER…EKEE. The span at 621-636 shows a compositional bias: acidic residues; it reads ADDDIYDGIEEEDADD. The SH2-binding; to FYN motif lies at 626-629; it reads YDGI. Residues 660–675 show a composition bias toward basic and acidic residues; the sequence is KDERKKSIREKPKVSE. Residues 693–703 are compositionally biased toward acidic residues; the sequence is VGEEVYDDVDA. Y698 is subject to Phosphotyrosine. Positions 722-739 are enriched in basic and acidic residues; sequence TKAEEKDPKKLKKQEKEE. Positions 732–739 match the Nuclear localization signal motif; sequence LKKQEKEE. The SH3 2 domain occupies 747–815; it reads KYDGEIRVLY…LRSYLVDNDG (69 aa).

In terms of assembly, part of a complex consisting of SKAP2, FYB1 and PTPNS1. Part of a complex consisting of SKAP2, FYB1 and LILRB3. Part of a complex consisting of SKAP1, FYB1 and CLNK. Interacts with CLNK (via its SH2 domain) and FYN; this interaction allows SKAP1 and FYB1 to recruit FYN to the complex, thus promoting the phosphorylation of CLNK by FYN. Interacts with FYN. Interacts with LCP2. Interacts with SKAP1. Interacts with SKAP2. Interacts with FASLG. Interacts with EVL. Interacts with TMEM47. Interacts with LCK. In terms of processing, T-cell receptor ligation leads to increased tyrosine phosphorylation.

It is found in the cytoplasm. The protein resides in the nucleus. Its subcellular location is the cell junction. Acts as an adapter protein of the FYN and LCP2 signaling cascades in T-cells. May play a role in linking T-cell signaling to remodeling of the actin cytoskeleton. Modulates the expression of IL2. Involved in platelet activation. Prevents the degradation of SKAP1 and SKAP2. May be involved in high affinity immunoglobulin epsilon receptor signaling in mast cells. This is FYN-binding protein 1 from Rattus norvegicus (Rat).